A 521-amino-acid polypeptide reads, in one-letter code: Cytochrome P450 1A1 (521 aa).

Residue Phe229 participates in substrate binding. Cys463 serves as a coordination point for heme.

It belongs to the cytochrome P450 family. Heme serves as cofactor.

It localises to the endoplasmic reticulum membrane. The protein localises to the microsome membrane. It catalyses the reaction an organic molecule + reduced [NADPH--hemoprotein reductase] + O2 = an alcohol + oxidized [NADPH--hemoprotein reductase] + H2O + H(+). Its function is as follows. Cytochromes P450 are a group of heme-thiolate monooxygenases. They oxidize a variety of structurally unrelated compounds, including steroids, fatty acids, and xenobiotics. The protein is Cytochrome P450 1A1 (cyp1a1) of Platichthys flesus (European flounder).